Consider the following 432-residue polypeptide: MTLWVLGLNHQTAPVDLRERAAFAGDALPRALDSLRTLPQVREAALLSTCNRTELYAMADDPQTLVAWLDMHAPGLSGYLYQHRDAEAVRHLFRVATGLDSMVLGEPQILGQVKDAWAVARAHGALGSGLDRLFQQTFSVAKRARTDTRVGANPVSVASTAVRLAQESFARLNESTVLLVGAGETIELAAKHLSEGRVRRLLIANRTLAHAQTLATQHGGVALPLTELDRHLAEADVVFSATAAREPVVTRVQVEQALRTRKRKPMLLFDLAVPRDIEASVAELSDAYLYTVDDLERAVEDNRRSRREAADQAEAIIDLQVARYVETLQANERQAPLKRLRAFGDSTRDELLAKARQQLSNGKPADEVLEQLAHALTNRLLHPPTAALRDAALNNDLDLTSAADRLFPEKPGYRHPPVATPIVRTDDANPAP.

Substrate contacts are provided by residues 49-52 (TCNR), serine 101, 106-108 (EPQ), and glutamine 112. Cysteine 50 (nucleophile) is an active-site residue. Residue 181 to 186 (GAGETI) coordinates NADP(+). The disordered stretch occupies residues 408 to 432 (PEKPGYRHPPVATPIVRTDDANPAP).

This sequence belongs to the glutamyl-tRNA reductase family. Homodimer.

The enzyme catalyses (S)-4-amino-5-oxopentanoate + tRNA(Glu) + NADP(+) = L-glutamyl-tRNA(Glu) + NADPH + H(+). It participates in porphyrin-containing compound metabolism; protoporphyrin-IX biosynthesis; 5-aminolevulinate from L-glutamyl-tRNA(Glu): step 1/2. In terms of biological role, catalyzes the NADPH-dependent reduction of glutamyl-tRNA(Glu) to glutamate 1-semialdehyde (GSA). The chain is Glutamyl-tRNA reductase from Xanthomonas campestris pv. campestris (strain B100).